The chain runs to 532 residues: ATP synthase subunit alpha (532 aa).

An ATP-binding site is contributed by 171-178; sequence GDRQTGKT.

This sequence belongs to the ATPase alpha/beta chains family. F-type ATPases have 2 components, CF(1) - the catalytic core - and CF(0) - the membrane proton channel. CF(1) has five subunits: alpha(3), beta(3), gamma(1), delta(1), epsilon(1). CF(0) has three main subunits: a(1), b(2) and c(9-12). The alpha and beta chains form an alternating ring which encloses part of the gamma chain. CF(1) is attached to CF(0) by a central stalk formed by the gamma and epsilon chains, while a peripheral stalk is formed by the delta and b chains.

It is found in the cell membrane. The catalysed reaction is ATP + H2O + 4 H(+)(in) = ADP + phosphate + 5 H(+)(out). Functionally, produces ATP from ADP in the presence of a proton gradient across the membrane. The alpha chain is a regulatory subunit. In Amoebophilus asiaticus (strain 5a2), this protein is ATP synthase subunit alpha.